The sequence spans 357 residues: MKAIAVKRGEDRPVVIEKPRPEPESGEALVRTLRVGVDGTDHEVIAGGHGGFPEGEDHLVLGHEAVGVVVDPNDTELEEGDIVVPTVRRPPASGTNEYFERDQPDMAPDGMYFERGIVGAHGYMSEFFTSPEKYLVRIPRSQAELGFLIEPISITEKALEHAYASRSAFDWDPSSAFVLGNGSLGLLTLAMLKVDDKGYENLYCLGRRDRPDPTIDIIEELDATYVDSRQTPVEDVPDVYEQMDFIYEATGFPKHAIQSVQALAPNGVGALLGVPSDWAFEVDAGAFHREMVLHNKALVGSVNSHVEHFEAATVTFTKLPKWFLEDLVTGVHPLSEFEAAFDDDDTTIKTAIEFSTV.

Residue D38 coordinates Zn(2+). The substrate site is built by T40 and H49. Positions 63 and 64 each coordinate Zn(2+). Substrate is bound by residues E114 and E150. Zn(2+) is bound at residue E150. NADP(+) is bound by residues 181 to 184 (NGSL), 207 to 208 (RR), S228, 272 to 274 (LGV), and 301 to 303 (SVN). N303 is a substrate binding site.

This sequence belongs to the zinc-containing alcohol dehydrogenase family. Glucose 1-dehydrogenase subfamily. Homodimer. Requires Zn(2+) as cofactor.

The enzyme catalyses D-glucose + NAD(+) = D-glucono-1,5-lactone + NADH + H(+). It carries out the reaction D-glucose + NADP(+) = D-glucono-1,5-lactone + NADPH + H(+). Activated by molar concentrations of KCl or NaCl. Inhibited by EDTA in vitro. In terms of biological role, catalyzes the NAD(P)(+)-dependent oxidation of D-glucose to D-gluconate. Displays broad substrate specificity since it is able to catalyze the oxidation of a number of alternative aldose sugars, such as D-xylose, D-galactose, and D-fucose, to the corresponding glyconate. Can utilize both NAD(+) and NADP(+) as electron acceptor, with a preference for NADP(+). Physiologically, seems to be involved in the degradation of glucose through a modified Entner-Doudoroff pathway. This Haloferax mediterranei (strain ATCC 33500 / DSM 1411 / JCM 8866 / NBRC 14739 / NCIMB 2177 / R-4) (Halobacterium mediterranei) protein is Glucose 1-dehydrogenase.